The chain runs to 65 residues: Large ribosomal subunit protein bL35 (65 aa).

The disordered stretch occupies residues 1–26 (MPKIKTLRGAAKRFKKTASGGFKRKQ). Over residues 10-26 (AAKRFKKTASGGFKRKQ) the composition is skewed to basic residues.

Belongs to the bacterial ribosomal protein bL35 family.

The chain is Large ribosomal subunit protein bL35 from Histophilus somni (strain 2336) (Haemophilus somnus).